The following is a 293-amino-acid chain: METGTFKVKSGLAQMLKGGVIMDVTTPEQAKIAEEAGACAVMALERVPSDIRAAGGVARMADPTIIEQIMKVVSIPVMAKCRIGHFVEAQILESMGVDYIDESEVLTPADENFHVWKHDFKVPFVCGCRDLGEALRRIGEGAAMIRTKGEAGTGNIVEAVRHMRSVMGSVRRVQSMSPDELSAYAKEINAPLELVLELHKTGKLPVVNFAAGGVATPADAALMMQLGADGVFVGSGIFKSSNPSAMAKAVVKAVTHYKDAQILAEISKGLGDAMPGLDIKQIDPDKLISQRGW.

Asp23 lines the D-ribose 5-phosphate pocket. The active-site Schiff-base intermediate with D-ribose 5-phosphate is the Lys80. D-ribose 5-phosphate is bound at residue Gly152. Residue Arg164 coordinates D-glyceraldehyde 3-phosphate. D-ribose 5-phosphate is bound by residues Gly213 and 234–235 (GS).

Belongs to the PdxS/SNZ family. As to quaternary structure, in the presence of PdxT, forms a dodecamer of heterodimers.

It catalyses the reaction aldehydo-D-ribose 5-phosphate + D-glyceraldehyde 3-phosphate + L-glutamine = pyridoxal 5'-phosphate + L-glutamate + phosphate + 3 H2O + H(+). It functions in the pathway cofactor biosynthesis; pyridoxal 5'-phosphate biosynthesis. Functionally, catalyzes the formation of pyridoxal 5'-phosphate from ribose 5-phosphate (RBP), glyceraldehyde 3-phosphate (G3P) and ammonia. The ammonia is provided by the PdxT subunit. Can also use ribulose 5-phosphate and dihydroxyacetone phosphate as substrates, resulting from enzyme-catalyzed isomerization of RBP and G3P, respectively. The protein is Pyridoxal 5'-phosphate synthase subunit PdxS of Dehalococcoides mccartyi (strain ATCC BAA-2100 / JCM 16839 / KCTC 5957 / BAV1).